The sequence spans 342 residues: Lumican (342 aa).

The signal sequence occupies residues 1–18; sequence MNLGVFPLLLALIGGASS. Residues Tyr20, Tyr23, and Tyr34 each carry the sulfotyrosine modification. An LRRNT domain is found at 32-70; the sequence is ALYGRSSPNCAPECNCPESYPSAMYCDELKLKSVPMVPP. LRR repeat units lie at residues 71–92, 95–118, 121–141, 142–163, 164–185, 189–209, 210–231, and 234–254; these read GIKYLYLRNNQIDHIDDKAFEN, DLQWLILDHNLLENSKIKGKVFSK, QLKKLHINYNNLTESVGPLPK, SLVDLQLTNNKISKLGSFDGLV, NLTFIHLQHNQLKEDAVSAALK, SLEYLDLSFNQMTKLPSGLPV, SLLTLYLDNNKISNIPDEYFKR, and ALQYLRLSHNELADSGVPGNS. An N-linked (GlcNAc...) (keratan sulfate) asparagine glycan is attached at Asn92. Residue Asn131 is glycosylated (N-linked (GlcNAc...) (keratan sulfate) asparagine). A glycan (N-linked (GlcNAc...) (keratan sulfate) asparagine) is linked at Asn164. A glycan (N-linked (GlcNAc...) (keratan sulfate) asparagine) is linked at Asn256. LRR repeat units lie at residues 259–280 and 281–300; these read SLLELDLSYNKLKSIPTVNENL and ENYYLEVNELEKFDVKSFCK. A disulfide bridge connects residues Cys299 and Cys332. Ser308 carries the post-translational modification Phosphoserine. An LRR 11 repeat occupies 309–330; it reads KIKHLRLDGNHITQTSLPPDMY.

Belongs to the small leucine-rich proteoglycan (SLRP) family. SLRP class II subfamily. In terms of assembly, binds to laminin. In terms of processing, sulfated on tyrosine residue(s). Post-translationally, contains keratan sulfate. In terms of tissue distribution, cornea and other tissues.

Its subcellular location is the secreted. It localises to the extracellular space. The protein localises to the extracellular matrix. The polypeptide is Lumican (LUM) (Bos taurus (Bovine)).